Reading from the N-terminus, the 451-residue chain is Trigger factor (451 aa).

Residues 165-250 (DDKLTIDFEG…LHQIQAREAL (86 aa)) enclose the PPIase FKBP-type domain.

It belongs to the FKBP-type PPIase family. Tig subfamily.

The protein localises to the cytoplasm. The enzyme catalyses [protein]-peptidylproline (omega=180) = [protein]-peptidylproline (omega=0). In terms of biological role, involved in protein export. Acts as a chaperone by maintaining the newly synthesized protein in an open conformation. Functions as a peptidyl-prolyl cis-trans isomerase. The sequence is that of Trigger factor from Helicobacter pylori (strain G27).